The sequence spans 422 residues: Aminopentol aminotransferase (422 aa).

K258 bears the N6-(pyridoxal phosphate)lysine mark.

The protein belongs to the class-III pyridoxal-phosphate-dependent aminotransferase family. The cofactor is pyridoxal 5'-phosphate.

The protein resides in the cytoplasm. The catalysed reaction is (2S,3S,5R,10R,12S,14S,15R,16R)-2-amino-12,16-dimethylicosane-3,5,10,14,15-pentol + pyruvate = (3S,5R,10R,12S,14S,15R,16R)-3,5,10,14,15-pentahydroxy-12,16-dimethylicosan-2-one + L-alanine. Its function is as follows. Involved in degradation of fumonisin B1. Catalyzes the deamination of aminopentol (HFB1) to 2-keto-HFB1. Pyruvate is the preferred cosubstrate, but it can also use several other alpha-keto acids as amino group acceptors. This is Aminopentol aminotransferase (fumI) from Sphingopyxis macrogoltabida (Sphingomonas macrogoltabidus).